The following is a 255-amino-acid chain: Kallikrein-15 (255 aa).

The signal sequence occupies residues 1–15; it reads MWLLLPLSFLLTSTA. Residues 16-20 constitute a propeptide, activation peptide; sequence QDGGK. The tract at residues 21 to 253 is serine protease; sequence LLEGEECAPH…YVKWIRETMK (233 aa). Cys-46 and Cys-62 are oxidised to a cystine. Residues His-61 and Asp-105 each act as charge relay system in the active site. Disulfide bonds link Cys-137–Cys-214, Cys-179–Cys-193, and Cys-204–Cys-229. Residue Asn-170 is glycosylated (N-linked (GlcNAc...) asparagine). Ser-208 serves as the catalytic Charge relay system. The N-linked (GlcNAc...) asparagine glycan is linked to Asn-231.

It belongs to the peptidase S1 family. Kallikrein subfamily.

The protein resides in the secreted. Functionally, protease whose physiological substrate is not yet known. The chain is Kallikrein-15 (KLK15) from Saguinus oedipus (Cotton-top tamarin).